A 466-amino-acid chain; its full sequence is Alpha-1,3-mannosyltransferase CMT1 (466 aa).

The interval 1 to 23 is disordered; that stretch reads MFRNTLRTFPRPATPSLPTSSHS. The Cytoplasmic segment spans residues 1–33; it reads MFRNTLRTFPRPATPSLPTSSHSPIARASLSKS. Residues 34–54 form a helical; Signal-anchor for type II membrane protein membrane-spanning segment; it reads PLFVLSLVLVCIFFLSFLSHP. Over 55 to 466 the chain is Lumenal; the sequence is DPSARKLQWP…ETRWVQPWLE (412 aa).

Requires Mg(2+) as cofactor. Mn(2+) is required as a cofactor. The cofactor is Co(2+).

Its subcellular location is the golgi apparatus membrane. Its pathway is protein modification; protein glycosylation. In terms of biological role, responsible for addition of mannose residues in an alpha-1,3 linkage to a polymannosly precursor. May be involved in synthesis of capsule glucuronoxylomannan. In Cryptococcus neoformans var. neoformans serotype D (strain JEC21 / ATCC MYA-565) (Filobasidiella neoformans), this protein is Alpha-1,3-mannosyltransferase CMT1.